Reading from the N-terminus, the 159-residue chain is WYSSMFAANIKQEPISHHNHHHHHHHGHHQHQQRHNSNSNASSPHQSPLPNLQLEQYLKQQQQQPLMWSGLPNPMQTIMPANMRPSPTAATAATTTELCAPTTTVAAIAMQANDKLQALTPPMDVTPPKSPAKSQQSCAEPEKEHDLMSNSSEDMKYMA.

Residues 18-34 show a composition bias toward basic residues; sequence HNHHHHHHHGHHQHQQR. 2 disordered regions span residues 18-49 and 119-159; these read HNHH…QSPL and LTPP…KYMA. Over residues 140 to 159 the composition is skewed to basic and acidic residues; sequence EPEKEHDLMSNSSEDMKYMA.

It belongs to the hunchback C2H2-type zinc-finger protein family.

It is found in the nucleus. Functionally, gap class segmentation protein that controls development of head structures. The sequence is that of Protein hunchback (hb) from Drosophila soonae (Fruit fly).